The primary structure comprises 509 residues: MLCQPAMLLDGLLLLATMAAAQHRGPEAGGHRQIHQVRRGQCSYTFVVPEPDICQLAPTAAPEALGGSNSLQRDLPASRLHLTDWRAQRAQRAQRVSQLEKILENNTQWLLKLEQSIKVNLRSHLVQAQQDTIQNQTTTMLALGANLMNQTKAQTHKLTAVEAQVLNQTLHMKTQMLENSLSTNKLERQMLMQSRELQRLQGRNRALETRLQALEAQHQAQLNSLQEKREQLHSLLGHQTGTLANLKHNLHALSSNSSSLQQQQQQLTEFVQRLVRIVAQDQHPVSLKTPKPVFQDCAEIKRSGVNTSGVYTIYETNMTKPLKVFCDMETDGGGWTLIQHREDGSVNFQRTWEEYKEGFGNVAREHWLGNEAVHRLTSRTAYLLRVELHDWEGRQTSIQYENFQLGSERQRYSLSVNDSSSSAGRKNSLAPQGTKFSTKDMDNDNCMCKCAQMLSGGWWFDACGLSNLNGIYYSVHQHLHKINGIRWHYFRGPSYSLHGTRMMLRPMGA.

Residues 1 to 21 (MLCQPAMLLDGLLLLATMAAA) form the signal peptide. Asn105, Asn135, Asn149, Asn167, Asn256, Asn306, Asn317, and Asn417 each carry an N-linked (GlcNAc...) asparagine glycan. The stretch at 181–269 (LSTNKLERQM…LQQQQQQLTE (89 aa)) forms a coiled coil. The region spanning 288–508 (KTPKPVFQDC…GTRMMLRPMG (221 aa)) is the Fibrinogen C-terminal domain. An intrachain disulfide couples Cys297 to Cys326. Residues 416–436 (VNDSSSSAGRKNSLAPQGTKF) form a disordered region. Cys450 and Cys463 form a disulfide bridge.

In terms of assembly, homodimer; disulfide-linked. Interacts with TEK/TIE2. As to expression, widely expressed.

It localises to the secreted. Its function is as follows. Binds to TEK/TIE2, modulating ANGPT1 signaling. Can induce tyrosine phosphorylation of TEK/TIE2. Promotes endothelial cell survival, migration and angiogenesis. The sequence is that of Angiopoietin-4 (Angpt4) from Mus musculus (Mouse).